Reading from the N-terminus, the 535-residue chain is T-box transcription factor TBX21 (535 aa).

The interval 1–62 is disordered; that stretch reads MGIVEPGCGD…SLGSPYPGGA (62 aa). Phosphoserine is present on Ser-53. At Tyr-77 the chain carries Phosphotyrosine. The segment at 83-109 is disordered; the sequence is AAGFPGAGESFPPPADAEGYQPGEGYA. A Phosphotyrosine modification is found at Tyr-118. Positions 141-326 form a DNA-binding region, T-box; it reads LNNHLLWSKF…NNPFAKGFRE (186 aa). Tyr-220 carries the phosphotyrosine; by ABL1 modification. Ser-225 bears the Phosphoserine mark. Position 266 is a phosphotyrosine; by ABL1 (Tyr-266). Thr-303 is modified (phosphothreonine). Tyr-305 carries the post-translational modification Phosphotyrosine; by ABL1. Lys-314 is covalently cross-linked (Glycyl lysine isopeptide (Lys-Gly) (interchain with G-Cter in ubiquitin)). The segment at 449 to 535 is disordered; that stretch reads RPMRTLPMEP…EGQFYNYFPN (87 aa). A compositionally biased stretch (low complexity) spans 503 to 520; that stretch reads SPYPSSGDSSSPAGAPSP. The residue at position 513 (Ser-513) is a Phosphoserine. Tyr-530 is subject to Phosphotyrosine; by ITK.

Interacts with RUNX1, RUNX3, ITK, ABL1, RELA, CDK9 and KDM6B. The phosphorylated form (at Thr-303) interacts with NFATC2. Interacts with SMARCA4 in a KDM6B-dependent manner. Interacts with CCTN1. Interacts with USP10. The phosphorylated form (at Tyr-530) interacts with GATA3. Phosphorylations at Ser-53, Tyr-77, Ser-225 and Ser-513 are regulated by mTORC1. Phosphorylation at Tyr-530 is essential for its interaction GATA3. Phosphorylation at Tyr-220, Tyr-266 and Tyr-305 enhances its transcriptional activator activity. Phosphorylation at Thr-303 is required for its interaction with NFATC2. Post-translationally, ubiquitinated at Lys-314, leading to its degradation by the proteasome. Ubiquitination is essential for controlling protein stability, binding to the T-box-binding element of the IFN-gamma promoter, and for interaction with NFATC2 through induction of phosphorylation at Thr-303. Deubiquitinated by USP10 leading to its stabilization. In terms of tissue distribution, T-cell specific.

The protein localises to the nucleus. Its function is as follows. Lineage-defining transcription factor which initiates Th1 lineage development from naive Th precursor cells both by activating Th1 genetic programs and by repressing the opposing Th2 and Th17 genetic programs. Activates transcription of a set of genes important for Th1 cell function, including those encoding IFN-gamma and the chemokine receptor CXCR3. Induces permissive chromatin accessibilty and CpG methylation in IFNG. Activates IFNG and CXCR3 genes in part by recruiting chromatin remodeling complexes including KDM6B, a SMARCA4-containing SWI/SNF-complex, and an H3K4me2-methyltransferase complex to their promoters and all of these complexes serve to establish a more permissive chromatin state conducive with transcriptional activation. Can activate Th1 genes also via recruitment of Mediator complex and P-TEFb (composed of CDK9 and CCNT1/cyclin-T1) in the form of the super elongation complex (SEC) to super-enhancers and associated genes in activated Th1 cells. Inhibits the Th17 cell lineage commitment by blocking RUNX1-mediated transactivation of Th17 cell-specific transcriptinal regulator RORC. Inhibits the Th2 cell lineage commitment by suppressing the production of Th2 cytokines, such as IL-4, IL-5, and IL- 13, via repression of transcriptional regulators GATA3 and NFATC2. Protects Th1 cells from amplifying aberrant type-I IFN response in an IFN-gamma abundant microenvironment by acting as a repressor of type-I IFN transcription factors and type-I IFN-stimulated genes. Acts as a regulator of antiviral B-cell responses; controls chronic viral infection by promoting the antiviral antibody IgG2a isotype switching and via regulation of a broad antiviral gene expression program. Required for the correct development of natural killer (NK) and mucosal-associated invariant T (MAIT) cells. The protein is T-box transcription factor TBX21 (TBX21) of Homo sapiens (Human).